The following is a 254-amino-acid chain: Triosephosphate isomerase (254 aa).

A substrate-binding site is contributed by 12–14 (NWK). Residue histidine 99 is the Electrophile of the active site. Glutamate 169 (proton acceptor) is an active-site residue. Substrate is bound by residues glycine 175, serine 214, and 235-236 (GG).

Belongs to the triosephosphate isomerase family. As to quaternary structure, homodimer.

Its subcellular location is the cytoplasm. It carries out the reaction D-glyceraldehyde 3-phosphate = dihydroxyacetone phosphate. The protein operates within carbohydrate biosynthesis; gluconeogenesis. Its pathway is carbohydrate degradation; glycolysis; D-glyceraldehyde 3-phosphate from glycerone phosphate: step 1/1. Involved in the gluconeogenesis. Catalyzes stereospecifically the conversion of dihydroxyacetone phosphate (DHAP) to D-glyceraldehyde-3-phosphate (G3P). The polypeptide is Triosephosphate isomerase (Bartonella henselae (strain ATCC 49882 / DSM 28221 / CCUG 30454 / Houston 1) (Rochalimaea henselae)).